We begin with the raw amino-acid sequence, 278 residues long: Large ribosomal subunit protein uL2 (278 aa).

Over residues 210 to 219 the composition is skewed to basic residues; that stretch reads RKRWLGKRPQ. The segment at 210–278 is disordered; it reads RKRWLGKRPQ…LIIRHRKGSK (69 aa). Positions 258–270 are enriched in basic and acidic residues; the sequence is KTRDVKKASEKLI.

The protein belongs to the universal ribosomal protein uL2 family. As to quaternary structure, part of the 50S ribosomal subunit. Forms a bridge to the 30S subunit in the 70S ribosome.

Functionally, one of the primary rRNA binding proteins. Required for association of the 30S and 50S subunits to form the 70S ribosome, for tRNA binding and peptide bond formation. It has been suggested to have peptidyltransferase activity; this is somewhat controversial. Makes several contacts with the 16S rRNA in the 70S ribosome. This chain is Large ribosomal subunit protein uL2, found in Lactobacillus acidophilus (strain ATCC 700396 / NCK56 / N2 / NCFM).